The primary structure comprises 437 residues: Protein translocase subunit SecY (437 aa).

The next 10 membrane-spanning stretches (helical) occupy residues 19–39 (LFTL…IPGV), 69–89 (LLQI…SIIL), 122–142 (VALA…APLF), 157–177 (IFTT…VMWL), 189–209 (GMSI…LWAI), 219–239 (WIEF…VVFV), 276–296 (VIPV…AQFA), 316–336 (PIYI…YVAI), 378–398 (GSLY…GFGA), and 400–420 (QNFP…LETV).

The protein belongs to the SecY/SEC61-alpha family. As to quaternary structure, component of the Sec protein translocase complex. Heterotrimer consisting of SecY, SecE and SecG subunits. The heterotrimers can form oligomers, although 1 heterotrimer is thought to be able to translocate proteins. Interacts with the ribosome. Interacts with SecDF, and other proteins may be involved. Interacts with SecA.

Its subcellular location is the cell membrane. Its function is as follows. The central subunit of the protein translocation channel SecYEG. Consists of two halves formed by TMs 1-5 and 6-10. These two domains form a lateral gate at the front which open onto the bilayer between TMs 2 and 7, and are clamped together by SecE at the back. The channel is closed by both a pore ring composed of hydrophobic SecY resides and a short helix (helix 2A) on the extracellular side of the membrane which forms a plug. The plug probably moves laterally to allow the channel to open. The ring and the pore may move independently. In Streptomyces galbus, this protein is Protein translocase subunit SecY.